Consider the following 459-residue polypeptide: Cysteine--tRNA ligase (459 aa).

Residue cysteine 28 coordinates Zn(2+). The 'HIGH' region motif lies at 30–40; the sequence is VTVYDLCHIGH. Zn(2+) is bound by residues cysteine 209, histidine 234, and glutamate 238. A 'KMSKS' region motif is present at residues 266–270; the sequence is KMSKS. Lysine 269 is a binding site for ATP.

It belongs to the class-I aminoacyl-tRNA synthetase family. As to quaternary structure, monomer. Zn(2+) is required as a cofactor.

It localises to the cytoplasm. It carries out the reaction tRNA(Cys) + L-cysteine + ATP = L-cysteinyl-tRNA(Cys) + AMP + diphosphate. In Haemophilus influenzae (strain PittGG), this protein is Cysteine--tRNA ligase.